We begin with the raw amino-acid sequence, 1232 residues long: MKEEVKGIPVRVALRCRPLVPKEISEGCQMCLSFVPGEPQVVVGTDKSFTYDFVFDPSTEQEEVFNTAVAPLIKGVFKGYNATVLAYGQTGSGKTYSMGGAYTAEQENEPTVGVIPRVIQLLFKEIDKKSDFEFTLKVSYLEIYNEEILDLLCPSREKAQINIREDPKEGIKIVGLTEKTVLVALDTVSCLEQGNNSRTVASTAMNSQSSRSHAIFTISLEQRKKSDKNSSFRSKLHLVDLAGSERQKKTKAEGDRLKEGININRGLLCLGNVISALGDDKKGGFVPYRDSKLTRLLQDSLGGNSHTLMIACVSPADSNLEETLNTLRYADRARKIKNKPIVNIDPQTAELNHLKQQVQQLQVLLLQAHGGTLPGSITVEPSENLQSLMEKNQSLVEENEKLSRGLSEAAGQTAQMLERIILTEQANEKMNAKLEELRQHAACKLDLQKLVETLEDQELKENVEIICNLQQLITQLSDETVACMAAAIDTAVEQEAQVETSPETSRSSDAFTTQHALRQAQMSKELVELNKALALKEALARKMTQNDSQLQPIQYQYQDNIKELELEVINLQKEKEELVLELQTAKKDANQAKLSERRRKRLQELEGQIADLKKKLNEQSKLLKLKESTERTVSKLNQEIRMMKNQRVQLMRQMKEDAEKFRQWKQKKDKEVIQLKERDRKRQYELLKLERNFQKQSNVLRRKTEEAAAANKRLKDALQKQREVADKRKETQSRGMEGTAARVKNWLGNEIEVMVSTEEAKRHLNDLLEDRKILAQDVAQLKEKKESGENPPPKLRRRTFSLTEVRGQVSESEDSITKQIESLETEMEFRSAQIADLQQKLLDAESEDRPKQRWENIATILEAKCALKYLIGELVSSKIQVSKLESSLKQSKTSCADMQKMLFEERNHFAEIETELQAELVRMEQQHQEKVLYLLSQLQQSQMAEKQLEESVSEKEQQLLSTLKCQDEELEKMREVCEQNQQLLRENEIIKQKLTLLQVASRQKHLPKDTLLSPDSSFEYVPPKPKPSRVKEKFLEQSMDIEDLKYCSEHSVNEHEDGDGDDDEGDDEEWKPTKLVKVSRKNIQGCSCKGWCGNKQCGCRKQKSDCGVDCCCDPTKCRNRQQGKDSLGTVERTQDSEGSFKLEDPTEVTPGLSFFNPVCATPNSKILKEMCDVEQVLSKKTPPAPSPFDLPELKHVATEYQENKAPGKKKKRALASNTSFFSGCSPIEEEAH.

The region spanning 9–336 is the Kinesin motor domain; sequence PVRVALRCRP…LRYADRARKI (328 aa). 88 to 95 contacts ATP; it reads GQTGSGKT. Residues 350–999 are a coiled coil; the sequence is ELNHLKQQVQ…IKQKLTLLQV (650 aa). Position 394 is a phosphoserine (Ser394). The tract at residues 496–515 is disordered; sequence AQVETSPETSRSSDAFTTQH. The span at 497–515 shows a compositional bias: polar residues; sequence QVETSPETSRSSDAFTTQH. Residues 663-1232 form a required for the interaction with PRC1 region; it reads QWKQKKDKEV…GCSPIEEEAH (570 aa). The Nuclear localization signal motif lies at 793-798; that stretch reads PKLRRR. Thr799 bears the Phosphothreonine mark. Phosphoserine is present on residues Ser801, Ser810, Ser815, and Ser951. Residue Thr995 is modified to Phosphothreonine. The segment at 1000–1232 is globular; sequence ASRQKHLPKD…GCSPIEEEAH (233 aa). Phosphoserine occurs at positions 1001, 1013, 1017, 1028, and 1126. A CRD; required for [4Fe-4S] cluster binding and localization to the spindle midzone and midbody during anaphase and telophase region spans residues 1086 to 1144; the sequence is CSCKGWCGNKQCGCRKQKSDCGVDCCCDPTKCRNRQQGKDSLGTVERTQDSEGSFKLED. Residues 1122–1142 form a disordered region; sequence QGKDSLGTVERTQDSEGSFKL. Positions 1132–1142 are enriched in basic and acidic residues; the sequence is RTQDSEGSFKL. A Phosphothreonine modification is found at Thr1181. At Ser1186 the chain carries Phosphoserine. Residue Lys1194 forms a Glycyl lysine isopeptide (Lys-Gly) (interchain with G-Cter in SUMO2) linkage. At Ser1225 the chain carries Phosphoserine.

This sequence belongs to the TRAFAC class myosin-kinesin ATPase superfamily. Kinesin family. Chromokinesin subfamily. In terms of assembly, interacts with the cytosolic iron-sulfur protein assembly (CIA) complex components CIAO2B and MMS19; the interactions facilitate the transfer of Fe-S clusters to KIF4A to ensure proper localization of KIF4A to mitotic machinery components. Interacts (via C-terminus) with unphosphorylated PRC1 (via N-terminus); the interaction is required for the progression of mitosis. [2Fe-2S] cluster serves as cofactor. Requires [4Fe-4S] cluster as cofactor. In terms of tissue distribution, highly expressed in hematopoietic tissues, fetal liver, spleen, thymus and adult thymus and bone marrow. Lower levels are found in heart, testis, kidney, colon and lung.

It localises to the nucleus matrix. Its subcellular location is the cytoplasm. It is found in the cytoskeleton. The protein resides in the spindle. The protein localises to the midbody. It localises to the chromosome. Its function is as follows. Iron-sulfur (Fe-S) cluster binding motor protein that has a role in chromosome segregation during mitosis. Translocates PRC1 to the plus ends of interdigitating spindle microtubules during the metaphase to anaphase transition, an essential step for the formation of an organized central spindle midzone and midbody and for successful cytokinesis. May play a role in mitotic chromosomal positioning and bipolar spindle stabilization. In Homo sapiens (Human), this protein is Chromosome-associated kinesin KIF4A (KIF4A).